The chain runs to 1078 residues: Teashirt homolog 1-A (1078 aa).

Disordered regions lie at residues 1 to 110, 140 to 197, and 271 to 300; these read MPRR…NVSY, KSNE…SNSA, and GHYR…MEME. Acidic residues predominate over residues 26-36; sequence IEEDNLEDDGL. A compositionally biased stretch (polar residues) spans 57–71; it reads PSYQNSPISSATNQD. Residues 143–197 show a composition bias toward low complexity; the sequence is ENSSPTTNTNKSSMSEATGSTSDPDTPTTIPSSSCTNTSTSISVTTSNSTNSNSA. 2 C2H2-type zinc fingers span residues 248–272 and 309–333; these read FKCK…ETGH and LKCM…KTKH. Residues 271-286 are compositionally biased toward basic and acidic residues; sequence GHYRDDNKDRDAERTK. Residues 365–394 are disordered; that stretch reads DSPEQAGISPGASVSESAKDPKAANPYVTP. The C2H2-type 3 zinc-finger motif lies at 418–442; sequence LKCMECGSSHDSLQQLTAHMMVTGH. 2 disordered regions span residues 472-524 and 850-877; these read LPPT…ENED and RLTP…EAMD. The segment covering 497-524 has biased composition (basic and acidic residues); sequence HSEEKKDPEKEKVNNCEVEKRIKEENED. Over residues 853–862 the composition is skewed to polar residues; sequence PKSSTPSTVS. A DNA-binding region (homeobox) is located at residues 885–955; that stretch reads RKGRQSNWNP…NVKYQLRRTG (71 aa). C2H2-type zinc fingers lie at residues 970–992 and 1038–1061; these read FFCN…LETH and FQCK…SKTH.

It belongs to the teashirt C2H2-type zinc-finger protein family.

It localises to the nucleus. In terms of biological role, probable transcriptional regulator involved in developmental processes. May act as a transcriptional repressor (Potential). Involved in two major neuronal regionalization processes: primary anteroposterior (AP) axis patterning of the CNS and segmentation of the cranial neuronal crest (CNS) development. This Xenopus laevis (African clawed frog) protein is Teashirt homolog 1-A (tshz1-a).